The chain runs to 176 residues: tRNA (adenine(37)-N6)-methyltransferase (176 aa).

Positions 1–94 (SFSHIWVQFV…YLPFVEAQPD (94 aa)) constitute a TsaA-like domain. S-adenosyl-L-methionine-binding positions include histidine 12, 12 to 13 (HG), arginine 40, leucine 50, and 74 to 77 (LDGT).

Belongs to the tRNA methyltransferase O family.

It catalyses the reaction N(6)-L-threonylcarbamoyladenosine(37) in tRNA + S-adenosyl-L-methionine = N(6)-methyl,N(6)-L-threonylcarbamoyladenosine(37) in tRNA + S-adenosyl-L-homocysteine + H(+). Its function is as follows. S-adenosyl-L-methionine-dependent methyltransferase responsible for the addition of the methyl group in the formation of N6-methyl-N6-threonylcarbamoyladenosine at position 37 (m(6)t(6)A37) of the tRNA anticodon loop of tRNA(Thr)(GGU). The methyl group of m(6)t(6)A37 appears to slightly improve the efficiency of the tRNA decoding ability. Binds to tRNA. The protein is tRNA (adenine(37)-N6)-methyltransferase of Eikenella corrodens.